Here is a 345-residue protein sequence, read N- to C-terminus: Phosphoribosylformylglycinamidine cyclo-ligase (345 aa).

The protein belongs to the AIR synthase family.

The protein localises to the cytoplasm. The enzyme catalyses 2-formamido-N(1)-(5-O-phospho-beta-D-ribosyl)acetamidine + ATP = 5-amino-1-(5-phospho-beta-D-ribosyl)imidazole + ADP + phosphate + H(+). Its pathway is purine metabolism; IMP biosynthesis via de novo pathway; 5-amino-1-(5-phospho-D-ribosyl)imidazole from N(2)-formyl-N(1)-(5-phospho-D-ribosyl)glycinamide: step 2/2. This Bifidobacterium longum subsp. infantis (strain ATCC 15697 / DSM 20088 / JCM 1222 / NCTC 11817 / S12) protein is Phosphoribosylformylglycinamidine cyclo-ligase.